The following is a 347-amino-acid chain: FK506-binding protein-like (347 aa).

Residues 1–36 (METSLISPMKENNTAQPQQREENTQQNLNAAVPIKQ) form a disordered region. A Phosphothreonine modification is found at Thr-3. 3 TPR repeats span residues 208–241 (AKEE…LLTL), 250–283 (TILH…EPGH), and 284–317 (LKAL…DPKN).

As to quaternary structure, forms a ternary complex with CDKN1A/p21 and HSP90AB1/Hsp90.

Functionally, may be involved in response to X-ray. Regulates p21 protein stability by binding to Hsp90 and p21. The sequence is that of FK506-binding protein-like (Fkbpl) from Rattus norvegicus (Rat).